A 509-amino-acid chain; its full sequence is 4-aminobutyrate aminotransferase (509 aa).

166 to 167 (GS) provides a ligand contact to pyridoxal 5'-phosphate. Arg223 is a binding site for substrate. N6-(pyridoxal phosphate)lysine is present on Lys363. Position 387 (Thr387) interacts with pyridoxal 5'-phosphate.

Belongs to the class-III pyridoxal-phosphate-dependent aminotransferase family. In terms of assembly, homodimer. Pyridoxal 5'-phosphate serves as cofactor.

It localises to the cytoplasm. The enzyme catalyses 4-aminobutanoate + 2-oxoglutarate = succinate semialdehyde + L-glutamate. Deaminates gamma-aminobutyric acid (GABA) to succinate-semialdehyde, which in turn is converted to succinate by the succinate semialdehyde dehydrogenase. Not required for the utilization of GABA as nitrogen source. This Mycosarcoma maydis (Corn smut fungus) protein is 4-aminobutyrate aminotransferase (GATA).